A 549-amino-acid chain; its full sequence is Oxygen-dependent choline dehydrogenase (549 aa).

4-33 lines the FAD pocket; it reads DFVIIGSGSAGSALAYRLSEDGKNSVLVIE. His465 functions as the Proton acceptor in the catalytic mechanism.

Belongs to the GMC oxidoreductase family. It depends on FAD as a cofactor.

It catalyses the reaction choline + A = betaine aldehyde + AH2. The catalysed reaction is betaine aldehyde + NAD(+) + H2O = glycine betaine + NADH + 2 H(+). It participates in amine and polyamine biosynthesis; betaine biosynthesis via choline pathway; betaine aldehyde from choline (cytochrome c reductase route): step 1/1. Involved in the biosynthesis of the osmoprotectant glycine betaine. Catalyzes the oxidation of choline to betaine aldehyde and betaine aldehyde to glycine betaine at the same rate. The protein is Oxygen-dependent choline dehydrogenase of Rhizobium etli (strain CIAT 652).